A 229-amino-acid polypeptide reads, in one-letter code: UPF0758 protein Moth_0536 (229 aa).

Positions 107 to 229 constitute an MPN domain; the sequence is VIRNPRDVAG…FTSLKERNLL (123 aa). Zn(2+) contacts are provided by H178, H180, and D191. Residues 178 to 191 carry the JAMM motif motif; that stretch reads HNHPSGDPTPSQED.

Belongs to the UPF0758 family.

In Moorella thermoacetica (strain ATCC 39073 / JCM 9320), this protein is UPF0758 protein Moth_0536.